A 79-amino-acid polypeptide reads, in one-letter code: Acyl carrier protein (79 aa).

The region spanning 2-77 (ADFEARVKEI…SAIDYVKTHV (76 aa)) is the Carrier domain. S37 carries the O-(pantetheine 4'-phosphoryl)serine modification.

This sequence belongs to the acyl carrier protein (ACP) family. Post-translationally, 4'-phosphopantetheine is transferred from CoA to a specific serine of apo-ACP by AcpS. This modification is essential for activity because fatty acids are bound in thioester linkage to the sulfhydryl of the prosthetic group.

It is found in the cytoplasm. It functions in the pathway lipid metabolism; fatty acid biosynthesis. In terms of biological role, carrier of the growing fatty acid chain in fatty acid biosynthesis. The sequence is that of Acyl carrier protein from Endomicrobium trichonymphae.